The following is a 448-amino-acid chain: tRNA modification GTPase MnmE (448 aa).

(6S)-5-formyl-5,6,7,8-tetrahydrofolate is bound by residues R22, E79, and K118. The TrmE-type G domain occupies G214–G371. N224 lines the K(+) pocket. GTP contacts are provided by residues N224–S229, T243–T249, and D268–G271. S228 is a binding site for Mg(2+). K(+) is bound by residues T243, I245, and T248. T249 serves as a coordination point for Mg(2+). K448 lines the (6S)-5-formyl-5,6,7,8-tetrahydrofolate pocket.

Belongs to the TRAFAC class TrmE-Era-EngA-EngB-Septin-like GTPase superfamily. TrmE GTPase family. Homodimer. Heterotetramer of two MnmE and two MnmG subunits. K(+) is required as a cofactor.

The protein resides in the cytoplasm. Exhibits a very high intrinsic GTPase hydrolysis rate. Involved in the addition of a carboxymethylaminomethyl (cmnm) group at the wobble position (U34) of certain tRNAs, forming tRNA-cmnm(5)s(2)U34. This Dechloromonas aromatica (strain RCB) protein is tRNA modification GTPase MnmE.